The sequence spans 152 residues: Nucleoside diphosphate kinase B (152 aa).

The tract at residues M1–K66 is interaction with AKAP13. Residues K12, F60, R88, T94, R105, and N115 each coordinate ATP. Catalysis depends on H118, which acts as the Pros-phosphohistidine intermediate.

The protein belongs to the NDK family. Hexamer of two different chains: An and B (A6, A5B, A4B2, A3B3, A2B4, AB5, B6). Interacts with CAPN8. Interacts with AKAP13. Interacts with ITGB1BP1 (via C-terminal domain region). Interacts with BCL2L10. Mg(2+) serves as cofactor.

The protein resides in the cytoplasm. It is found in the cell projection. The protein localises to the lamellipodium. Its subcellular location is the ruffle. It localises to the nucleus. It catalyses the reaction a 2'-deoxyribonucleoside 5'-diphosphate + ATP = a 2'-deoxyribonucleoside 5'-triphosphate + ADP. It carries out the reaction a ribonucleoside 5'-diphosphate + ATP = a ribonucleoside 5'-triphosphate + ADP. The catalysed reaction is ATP + protein L-histidine = ADP + protein N-phospho-L-histidine.. Major role in the synthesis of nucleoside triphosphates other than ATP. The ATP gamma phosphate is transferred to the NDP beta phosphate via a ping-pong mechanism, using a phosphorylated active-site intermediate. Negatively regulates Rho activity by interacting with AKAP13/LBC. Acts as a transcriptional activator of the MYC gene; binds DNA non-specifically. Binds to both single-stranded guanine- and cytosine-rich strands within the nuclease hypersensitive element (NHE) III(1) region of the MYC gene promoter. Does not bind to duplex NHE III(1). Has G-quadruplex (G4) DNA-binding activity, which is independent of its nucleotide-binding and kinase activity. Binds both folded and unfolded G4 with similar low nanomolar affinities. Stabilizes folded G4s regardless of whether they are prefolded or not. Exhibits histidine protein kinase activity. This chain is Nucleoside diphosphate kinase B (NME2), found in Bos taurus (Bovine).